The following is a 426-amino-acid chain: Glutamyl-tRNA reductase (426 aa).

Residues T51 to R54, S110, E115 to Q117, and Q121 each bind substrate. The active-site Nucleophile is the C52. G190–A195 is a binding site for NADP(+).

This sequence belongs to the glutamyl-tRNA reductase family. Homodimer.

It carries out the reaction (S)-4-amino-5-oxopentanoate + tRNA(Glu) + NADP(+) = L-glutamyl-tRNA(Glu) + NADPH + H(+). Its pathway is porphyrin-containing compound metabolism; protoporphyrin-IX biosynthesis; 5-aminolevulinate from L-glutamyl-tRNA(Glu): step 1/2. Functionally, catalyzes the NADPH-dependent reduction of glutamyl-tRNA(Glu) to glutamate 1-semialdehyde (GSA). This Desulfotalea psychrophila (strain LSv54 / DSM 12343) protein is Glutamyl-tRNA reductase.